Consider the following 775-residue polypeptide: Zinc finger protein GLIS3 (775 aa).

2 disordered regions span residues 121–147 and 282–314; these read TESS…KKRA and PGST…AHLH. A compositionally biased stretch (low complexity) spans 123–133; that stretch reads SSHSPYPSPRH. Basic residues predominate over residues 134–147; the sequence is SSTRSHSARSKKRA. Pro residues predominate over residues 289-307; it reads PPAPPLPPLPPPPGPPPPY. The C2H2-type 1 zinc finger occupies 345-370; it reads HCCRWIDCSALYDQQEELVRHIEKVH. The segment at 379-406 adopts a C2H2-type 2; atypical zinc-finger fold; it reads FTCFWAGCPRRYKPFNARYKLLIHMRVH. C2H2-type zinc fingers lie at residues 412–436, 442–466, and 472–496; these read NKCT…LRSH, YLCQ…QRTH, and YACQ…VKAH. Disordered regions lie at residues 485–512 and 529–665; these read DPSS…SSTE and PATS…QPNG. The short motif at 491–507 is the Bipartite nuclear localization signal element; sequence KHVKAHSSKEQQARKKL. The span at 497–512 shows a compositional bias: basic and acidic residues; it reads SSKEQQARKKLRSSTE. Composition is skewed to polar residues over residues 557 to 567, 588 to 600, and 632 to 663; these read IFSSNYSSRSG, VQGS…SQLP, and SILQ…SFQP.

Belongs to the GLI C2H2-type zinc-finger protein family. As to expression, in the adult, expressed at high levels in the kidney and at lower levels in the brain, skeletal muscle, pancreas, liver, lung, thymus and ovary.

The protein localises to the nucleus. Acts both as a repressor and an activator of transcription. Binds to the consensus sequence 5'-GACCACCCAC-3'. This Homo sapiens (Human) protein is Zinc finger protein GLIS3 (GLIS3).